The following is a 1347-amino-acid chain: Serine-aspartate repeat-containing protein D (1347 aa).

A signal peptide spans 1-35 (MLNRENKTAITRKGMVSNRLNKFSIRKYTVGTASI). A YSIRK-G/S signaling motif motif is present at residues 23 to 34 (FSIRKYTVGTAS). Residues 36 to 568 (LVGTTLIFGL…NNQSGGAGQE (533 aa)) form a ligand binding A region region. The tract at residues 55–185 (STNKELNEAT…NKKVDAKTES (131 aa)) is disordered. 2 stretches are compositionally biased toward polar residues: residues 62–71 (EATTSASDNQ) and 94–109 (EMVS…NGNK). Residues 130–145 (KSDEQASPKSTNEDLN) show a composition bias toward basic and acidic residues. Composition is skewed to polar residues over residues 146–155 (TKQTISNQEA) and 163–173 (NKSVVNAQPTN). A compositionally biased stretch (basic and acidic residues) spans 174–183 (EENKKVDAKT). 5 consecutive CNA-B domains span residues 569–680 (VYKI…IYKP), 681–791 (KYNL…YKTP), 792–901 (KYNL…FYKP), 902–1012 (TYNL…YKTS), and 1013–1123 (KYSL…EEDT). Disordered stretches follow at residues 857 to 883 (ETPS…TSTT), 972 to 992 (YTPT…GLTT), and 1078 to 1323 (EKPA…SNNA). Polar residues-rich tracts occupy residues 860 to 869 (SGYTPTQVGS) and 972 to 981 (YTPTSVTSGN). 2 stretches are compositionally biased toward acidic residues: residues 1091 to 1101 (TEDDKDADGGE) and 1118 to 1286 (YFEE…DSDS). The LPXTG sorting signal motif lies at 1310-1314 (LPETG). Threonine 1313 bears the Pentaglycyl murein peptidoglycan amidated threonine mark. Residues 1314-1347 (GNENSGSNNATLFGGLFAALGSLLLFGRRKKQNK) constitute a propeptide, removed by sortase.

Belongs to the serine-aspartate repeat-containing protein (SDr) family. In terms of assembly, interacts with host DSG1; this interaction increases S.aureus adherence to keratinocytes.

It is found in the secreted. Its subcellular location is the cell wall. In terms of biological role, cell surface-associated calcium-binding protein which plays an important role in adhesion and pathogenesis. Mediates interactions with components of the extracellular matrix such as host DSG1 to promote bacterial adhesion to host cells. Contributes to the resistance to killing by innate immune components such as neutrophils present in blood and thus attenuates bacterial clearance. This is Serine-aspartate repeat-containing protein D (sdrD) from Staphylococcus aureus (strain MW2).